Here is a 552-residue protein sequence, read N- to C-terminus: MDNMSITNTPTSNDACLSIVHSLMCHRQGGESETFAKRAIESLVKKLKEKKDELDSLITAITTNGAHPSKCVTIQRTLDGRLQVAGRKGFPHVIYARLWRWPDLHKNELKHVKYCQYAFDLKCDSVCVNPYHYERVVSPGIDLSGLTLQSNAPPSMLVKDEYVHDFEGQPSLPTEGHSIQTIQHPPSNRASTETYSAPALLAPSESNATSTTNFPNIPVASTSQPASILAGSHSEGLLQIASGPQPGQQQNGFTAQPATYHHNSTTTWTGSRTAPYTPNLPHHQNGHLQHHPPMPPHPGHYWPVHNELAFQPPISNHPAPEYWCSIAYFEMDVQVGETFKVPSSCPIVTVDGYVDPSGGDRFCLGQLSNVHRTEAIERARLHIGKGVQLECKGEGDVWVRCLSDHAVFVQSYYLDREAGRAPGDAVHKIYPSAYIKVFDLRQCHRQMQQQAATAQAAAAAQAAAVAGNIPGPGSVGGIAPAISLSAAAGIGVDDLRRLCILRMSFVKGWGPDYPRQSIKETPCWIEIHLHRALQLLDEVLHTMPIADPQPLD.

Residues methionine 1–tyrosine 322 are mediates interaction with ZBTB7A. The region spanning serine 18 to aspartate 142 is the MH1 domain. N6-acetyllysine is present on lysine 37. Residues valine 44–serine 69 are required for interaction with TSC22D1. Cysteine 71 contributes to the Zn(2+) binding site. Lysine 113 participates in a covalent cross-link: Glycyl lysine isopeptide (Lys-Gly) (interchain with G-Cter in SUMO2). Positions 115, 127, and 132 each coordinate Zn(2+). Residues glutamate 167–glutamate 193 are disordered. Polar residues predominate over residues histidine 177 to glutamate 193. The segment at proline 275–proline 320 is SAD. In terms of domain architecture, MH2 spans tryptophan 323–aspartate 552. N6-acetyllysine is present on residues lysine 428 and lysine 507. Lysine 519 is covalently cross-linked (Glycyl lysine isopeptide (Lys-Gly) (interchain with G-Cter in ubiquitin)).

The protein belongs to the dwarfin/SMAD family. In terms of assembly, monomer; in the absence of TGF-beta activation. Heterotrimer; on TGF-beta activation. Heterotrimer composed of two molecules of a C-terminally phosphorylated R-SMAD molecule, SMAD2 or SMAD3, and one molecule of SMAD4 to form the transcriptional active SMAD2/SMAD3-SMAD4 complex. Found in a ternary complex composed of SMAD4, STK11/LKB1 and STK11IP. Found in a complex with SMAD1 and YY1. Identified in a complex that contains at least ZNF451, SMAD2, SMAD3 and SMAD4. Interacts with ATF2, COPS5, DACH1, MSG1, SKI, STK11/LKB1, STK11IP and TRIM33. Associates with ZNF423 or ZNF521 in response to BMP2 leading to activate transcription of BMP target genes. Interacts with USP9X. Interacts with RBPMS. Interacts with WWTR1 (via coiled-coil domain). Interacts with CITED1 and CITED2. Interacts with PDPK1 (via PH domain). Interacts with VPS39; this interaction affects heterodimer formation with SMAD3, but not with SMAD2, and leads to inhibition of SMAD3-dependent transcription activation. Interactions with VPS39 and SMAD2 may be mutually exclusive. Interacts (via MH2 domain) with ZNF451 (via N-terminal zinc-finger domains). Interacts with ZC3H3. Interacts weakly with ZNF8. Interacts with NUP93 and IPO7; translocates SMAD4 to the nucleus through the NPC upon BMP7 stimulation resulting in activation of SMAD4 signaling. Interacts with CREB3L1, the interaction takes place upon TGFB1 induction and SMAD4 acts as a CREB3L1 coactivator to induce the expression of genes involved in the assembly of collagen extracellular matrix. Interacts with DLX1. Interacts with ZBTB7A; the interaction is direct and stimulated by TGFB1. Interacts with CREBBP; the recruitment of this transcriptional coactivator is negatively regulated by ZBTB7A. Interacts with EP300; the interaction with this transcriptional coactivator is negatively regulated by ZBTB7A. Interacts with HDAC1. Interacts (via MH2 domain) with ZMIZ1 (via SP-RING-type domain); in the TGF-beta signaling pathway increases the activity of the SMAD3/SMAD4 transcriptional complex. Interacts (via N-terminus) with TSC22D1. Phosphorylated by PDPK1. In terms of processing, monoubiquitinated on Lys-519 by E3 ubiquitin-protein ligase TRIM33. Monoubiquitination hampers its ability to form a stable complex with activated SMAD2/3 resulting in inhibition of TGF-beta/BMP signaling cascade. Deubiquitination by USP9X restores its competence to mediate TGF-beta signaling.

The protein resides in the cytoplasm. The protein localises to the nucleus. In terms of biological role, common SMAD (co-SMAD) is the coactivator and mediator of signal transduction by TGF-beta (transforming growth factor). Component of the heterotrimeric SMAD2/SMAD3-SMAD4 complex that forms in the nucleus and is required for the TGF-mediated signaling. Promotes binding of the SMAD2/SMAD4/FAST-1 complex to DNA and provides an activation function required for SMAD1 or SMAD2 to stimulate transcription. Component of the multimeric SMAD3/SMAD4/JUN/FOS complex which forms at the AP1 promoter site; required for synergistic transcriptional activity in response to TGF-beta. Acts synergistically with SMAD1 and YY1 in bone morphogenetic protein (BMP)-mediated cardiac-specific gene expression. Binds to SMAD binding elements (SBEs) (5'-GTCT/AGAC-3') within BMP response element (BMPRE) of cardiac activating regions. May act as a tumor suppressor. Positively regulates PDPK1 kinase activity by stimulating its dissociation from the 14-3-3 protein YWHAQ which acts as a negative regulator. In muscle physiology, plays a central role in the balance between atrophy and hypertrophy. When recruited by MSTN, promotes atrophy response via phosphorylated SMAD2/4. MSTN decrease causes SMAD4 release and subsequent recruitment by the BMP pathway to promote hypertrophy via phosphorylated SMAD1/5/8. The chain is Mothers against decapentaplegic homolog 4 (Smad4) from Rattus norvegicus (Rat).